The following is a 540-amino-acid chain: 2-isopropylmalate synthase (540 aa).

The Pyruvate carboxyltransferase domain occupies 8–271; that stretch reads VLIFDTTLRD…NPFFGRESDS (264 aa). Residues aspartate 17, histidine 208, histidine 210, and asparagine 244 each contribute to the Mn(2+) site. Residues 408–540 are regulatory domain; that stretch reads QLRLVQVSCG…AVLADRRPGI (133 aa).

This sequence belongs to the alpha-IPM synthase/homocitrate synthase family. LeuA type 1 subfamily. In terms of assembly, homodimer. It depends on Mn(2+) as a cofactor.

It localises to the cytoplasm. It catalyses the reaction 3-methyl-2-oxobutanoate + acetyl-CoA + H2O = (2S)-2-isopropylmalate + CoA + H(+). It functions in the pathway amino-acid biosynthesis; L-leucine biosynthesis; L-leucine from 3-methyl-2-oxobutanoate: step 1/4. Catalyzes the condensation of the acetyl group of acetyl-CoA with 3-methyl-2-oxobutanoate (2-ketoisovalerate) to form 3-carboxy-3-hydroxy-4-methylpentanoate (2-isopropylmalate). The chain is 2-isopropylmalate synthase from Prochlorococcus marinus (strain MIT 9303).